We begin with the raw amino-acid sequence, 338 residues long: Phenylalanine--tRNA ligase alpha subunit (338 aa).

Glu259 provides a ligand contact to Mg(2+).

Belongs to the class-II aminoacyl-tRNA synthetase family. Phe-tRNA synthetase alpha subunit type 1 subfamily. Tetramer of two alpha and two beta subunits. The cofactor is Mg(2+).

Its subcellular location is the cytoplasm. It carries out the reaction tRNA(Phe) + L-phenylalanine + ATP = L-phenylalanyl-tRNA(Phe) + AMP + diphosphate + H(+). The sequence is that of Phenylalanine--tRNA ligase alpha subunit from Janthinobacterium sp. (strain Marseille) (Minibacterium massiliensis).